The following is a 162-amino-acid chain: Sorting nexin-3 (162 aa).

Position 2 is an N-acetylalanine (alanine 2). The region spanning 27-151 (NFLEIDVSNP…HMFLQDEIID (125 aa)) is the PX domain. Position 43 is an omega-N-methylarginine (arginine 43). A 1,2-diacyl-sn-glycero-3-phospho-(1D-myo-inositol-3-phosphate)-binding residues include arginine 70, serine 72, lysine 95, and arginine 118. Serine 72 bears the Phosphoserine mark. Lysine 95 participates in a covalent cross-link: Glycyl lysine isopeptide (Lys-Gly) (interchain with G-Cter in SUMO2). The tract at residues 147 to 162 (DEIIDKSYTPSKIRHA) is binds predominantly to PtdIns(P5) and weaker to PtdIns(P3) abd PtdIns(P4); involved in neurite outgrowth regulation.

It belongs to the sorting nexin family. As to quaternary structure, interacts with VPS26A, VPS29 and VPS35; the interaction with VPS35 is direct. The association with the retromer CSC subcomplex subunits is proposed to represent a functional distinct retromer variant described as SNX3-retromer complex. Interacts with USP10 and SCNN1A. Interacts with TRFC. Interacts with SNX8; 2 molecules of SNX8 seems to associate with one molecule of SNX3. Interacts with PTPRU. Interacts with MON2 and DOP1B. Ubiquitinated, leading to its proteasomal degradation. Deubiquitinated by USP10.

Its subcellular location is the early endosome. It is found in the cytoplasmic vesicle. The protein localises to the phagosome. In terms of biological role, phosphoinositide-binding protein required for multivesicular body formation. Specifically binds phosphatidylinositol 3-phosphate (PtdIns(P3)). Can also bind phosphatidylinositol 4-phosphate (PtdIns(P4)), phosphatidylinositol 5-phosphate (PtdIns(P5)) and phosphatidylinositol 3,5-biphosphate (PtdIns(3,5)P2). Plays a role in protein transport between cellular compartments. Together with RAB7A facilitates endosome membrane association of the retromer cargo-selective subcomplex (CSC/VPS). May in part act as component of the SNX3-retromer complex which mediates the retrograde endosome-to-TGN transport of WLS distinct from the SNX-BAR retromer pathway. Promotes stability and cell surface expression of epithelial sodium channel (ENAC) subunits SCNN1A and SCNN1G. Not involved in EGFR degradation. Involved in the regulation of phagocytosis in dendritic cells possibly by regulating EEA1 recruitment to the nascent phagosomes. Involved in iron homeostasis through regulation of endocytic recycling of the transferrin receptor TFRC presumably by delivering the transferrin:transferrin receptor complex to recycling endosomes; the function may involve the CSC retromer subcomplex. In the case of Salmonella enterica infection plays arole in maturation of the Salmonella-containing vacuole (SCV) and promotes recruitment of LAMP1 to SCVs. This Homo sapiens (Human) protein is Sorting nexin-3.